The sequence spans 285 residues: Bifunctional protein FolD (285 aa).

NADP(+) contacts are provided by residues 165-167 (GRS) and Ser-190.

Belongs to the tetrahydrofolate dehydrogenase/cyclohydrolase family. Homodimer.

The enzyme catalyses (6R)-5,10-methylene-5,6,7,8-tetrahydrofolate + NADP(+) = (6R)-5,10-methenyltetrahydrofolate + NADPH. It carries out the reaction (6R)-5,10-methenyltetrahydrofolate + H2O = (6R)-10-formyltetrahydrofolate + H(+). It functions in the pathway one-carbon metabolism; tetrahydrofolate interconversion. Catalyzes the oxidation of 5,10-methylenetetrahydrofolate to 5,10-methenyltetrahydrofolate and then the hydrolysis of 5,10-methenyltetrahydrofolate to 10-formyltetrahydrofolate. In Burkholderia pseudomallei (strain 1710b), this protein is Bifunctional protein FolD.